The chain runs to 343 residues: Multidrug resistance protein MdtN (343 aa).

The Cytoplasmic segment spans residues 1-12; the sequence is MESTPKKAPRSK. Residues 13–33 traverse the membrane as a helical; Signal-anchor for type II membrane protein segment; sequence FPALLVVALALVALVFVIWRV. The Periplasmic portion of the chain corresponds to 34 to 343; sequence DSAPSTNDAY…ASAVANLEPQ (310 aa).

This sequence belongs to the membrane fusion protein (MFP) (TC 8.A.1) family. As to quaternary structure, could be part of a tripartite efflux system composed of MdtN, MdtO and MdtP.

The protein resides in the cell inner membrane. Functionally, could be involved in resistance to puromycin, acriflavine and tetraphenylarsonium chloride. This chain is Multidrug resistance protein MdtN (mdtN), found in Escherichia coli O6:H1 (strain CFT073 / ATCC 700928 / UPEC).